The chain runs to 650 residues: uncharacterized protein (650 aa).

This sequence belongs to the MG032/MG096/MG288 family.

This is an uncharacterized protein from Mycoplasma genitalium (strain ATCC 33530 / DSM 19775 / NCTC 10195 / G37) (Mycoplasmoides genitalium).